A 529-amino-acid chain; its full sequence is MVLEYQQREGKGSSSKSMPPDSSSTTIHTCSEAQTGEDKGLLDPHLSVLELLSKTGHSPSPMGQNLVTSIDISGNHNVNDSISGSWQAIQPLDLGASFIPERCSSQTTNGSILSSSDTSEEEQELLQAPAADIINIIKQGQEGANVVSPSHPFKQLQKIISLPLPGKEKTPFNEQDDDGDEDEAFEEDSVTITKSLTSSTNSFVMPKLSLTQKNPVFRLLILGRTGSSFYQSIPKEYQSLFELPKYHDSATFPQYTGIVIIFQELREMVSLLNRIVQYSPGKPVIPICQPGQVIQVKNVLKSFLRNKLVKLLFPPVVVTNKRDLKKMFQRLQDLSLEYGEDVNEEDNDDEAIHTKSRSYCRNKKAENSKKKSPKSNKKPKRKKQKFFTSWFTWGISITIGISFGCCVTYFVTAAYEHQTVKSLSLRPSILASLLSLDSSSDTINTPATASPSSTEQFLWFDKGTLQINFHSDGFIMKSLTIIKETWGKMNTFVLHALSKPLKFLENLNKSSEFSIDESNRILALGYILL.

Residues 1-11 show a composition bias toward basic and acidic residues; that stretch reads MVLEYQQREGK. Residues 1–41 are disordered; it reads MVLEYQQREGKGSSSKSMPPDSSSTTIHTCSEAQTGEDKGL. Over residues 12-24 the composition is skewed to low complexity; the sequence is GSSSKSMPPDSSS. The segment covering 25 to 34 has biased composition (polar residues); that stretch reads TTIHTCSEAQ. Residues Ser114 and Ser119 each carry the phosphoserine modification. The tract at residues 345 to 381 is disordered; it reads EDNDDEAIHTKSRSYCRNKKAENSKKKSPKSNKKPKR. Residues 370-381 are compositionally biased toward basic residues; the sequence is KKSPKSNKKPKR. Residues 389–411 form a helical membrane-spanning segment; it reads SWFTWGISITIGISFGCCVTYFV.

Belongs to the ATG32 family. Interacts with ATG8 and ATG11. In terms of processing, phosphorylation of Ser-114 and Ser-119 are critically important for mitophagy and for the ATG11-ATG32 interaction. Phosphorylation depends on both HOG1 and PBS2.

It localises to the mitochondrion outer membrane. It is found in the vacuole membrane. Its subcellular location is the preautophagosomal structure membrane. Mitophagy-specific receptor that recruits the autophagic machinery to mitochondria and regulates selective degradation of mitochondria. Mitophagy contributes to regulate mitochondrial quantity and quality by eliminating the mitochondria to a basal level to fulfill cellular energy requirements and preventing excess ROS production. Recruits ATG11 to the surface of mitochondria. Also promotes autophagy-dependent peroxisome degradation. This Saccharomyces cerevisiae (strain RM11-1a) (Baker's yeast) protein is Autophagy-related protein 32 (ATG32).